We begin with the raw amino-acid sequence, 360 residues long: Amine dehydrogenase (360 aa).

It belongs to the amine dehydrogenase family. In terms of assembly, homodimer.

The catalysed reaction is a secondary alkyl amine + NAD(+) + H2O = a ketone + NH4(+) + NADH + H(+). It catalyses the reaction a secondary alkyl amine + NADP(+) + H2O = a ketone + NH4(+) + NADPH + H(+). It carries out the reaction serinol + NAD(+) + H2O = dihydroxyacetone + NH4(+) + NADH + H(+). The enzyme catalyses serinol + NADP(+) + H2O = dihydroxyacetone + NH4(+) + NADPH + H(+). The catalysed reaction is 2-aminopropan-1-ol + NAD(+) + H2O = hydroxyacetone + NH4(+) + NADH + H(+). It catalyses the reaction (R)-1-phenylethylamine + NAD(+) + H2O = acetophenone + NH4(+) + NADH + H(+). It carries out the reaction (S)-1-phenylethylamine + NAD(+) + H2O = acetophenone + NH4(+) + NADH + H(+). The enzyme catalyses (2S)-2-aminobutan-1-ol + NAD(+) + H2O = 1-hydroxy-2-butanone + NH4(+) + NADH + H(+). The catalysed reaction is (2S)-2-amino-3-methylbutan-1-ol + NAD(+) + H2O = 1-hydroxy-3-methylbutan-2-one + NH4(+) + NADH + H(+). It catalyses the reaction 2-aminopentan-1-ol + NAD(+) + H2O = 1-hydroxypentan-2-one + NH4(+) + NADH + H(+). It carries out the reaction (S)-leucinol + NAD(+) + H2O = 1-hydroxy-4-methylpentan-2-one + NH4(+) + NADH + H(+). The enzyme catalyses (S)-isoleucinol + NAD(+) + H2O = (3S)-1-hydroxy-3-methylpentan-2-one + NH4(+) + NADH + H(+). The catalysed reaction is (S)-methioninol + NAD(+) + H2O = 1-hydroxy-4-(methythio)butan-2-one + NH4(+) + NADH + H(+). It catalyses the reaction 2-aminocyclohexanol + NAD(+) + H2O = 2-hydroxycyclohexan-1-one + NH4(+) + NADH + H(+). It carries out the reaction L-alanine + NAD(+) + H2O = pyruvate + NH4(+) + NADH + H(+). The enzyme catalyses D-alanine + NAD(+) + H2O = pyruvate + NH4(+) + NADH + H(+). The catalysed reaction is L-aspartate + NAD(+) + H2O = oxaloacetate + NH4(+) + NADH + H(+). It catalyses the reaction D-aspartate + NAD(+) + H2O = oxaloacetate + NH4(+) + NADH + H(+). It carries out the reaction L-glutamate + NAD(+) + H2O = 2-oxoglutarate + NH4(+) + NADH + H(+). The enzyme catalyses D-glutamate + NAD(+) + H2O = 2-oxoglutarate + NH4(+) + NADH + H(+). The catalysed reaction is L-serine + NAD(+) + H2O = 3-hydroxypyruvate + NH4(+) + NADH + H(+). It catalyses the reaction D-serine + NAD(+) + H2O = 3-hydroxypyruvate + NH4(+) + NADH + H(+). It carries out the reaction methylamine + NAD(+) + H2O = formaldehyde + NH4(+) + NADH + H(+). The enzyme catalyses ethylamine + NAD(+) + H2O = acetaldehyde + NH4(+) + NADH + H(+). The catalysed reaction is propylamine + NAD(+) + H2O = propanal + NH4(+) + NADH + H(+). It catalyses the reaction butylamine + NAD(+) + H2O = butanal + NH4(+) + NADH + H(+). It carries out the reaction hexylamine + NAD(+) + H2O = hexanal + NH4(+) + NADH + H(+). The enzyme catalyses octylamine + NAD(+) + H2O = octanal + NH4(+) + NADH + H(+). The catalysed reaction is (R)-sec-butylamine + NAD(+) + H2O = butan-2-one + NH4(+) + NADH + H(+). It catalyses the reaction (S)-sec-butylamine + NAD(+) + H2O = butan-2-one + NH4(+) + NADH + H(+). It carries out the reaction 2-aminopentane + NAD(+) + H2O = pentan-2-one + NH4(+) + NADH + H(+). The enzyme catalyses 3-aminopentane + NAD(+) + H2O = pentan-3-one + NH4(+) + NADH + H(+). The catalysed reaction is (2R)-heptan-2-amine + NAD(+) + H2O = heptan-2-one + NH4(+) + NADH + H(+). It catalyses the reaction (2S)-heptan-2-amine + NAD(+) + H2O = heptan-2-one + NH4(+) + NADH + H(+). It carries out the reaction benzylamine + NAD(+) + H2O = benzaldehyde + NH4(+) + NADH + H(+). The enzyme catalyses 3-aminobutan-2-ol + NAD(+) + H2O = acetoin + NH4(+) + NADH + H(+). The catalysed reaction is 3-aminobutan-1-ol + NAD(+) + H2O = 4-hydroxybutan-2-one + NH4(+) + NADH + H(+). It catalyses the reaction 5-hydroxypentan-2-amine + NAD(+) + H2O = 5-hydroxypentan-2-one + NH4(+) + NADH + H(+). It carries out the reaction 4-hydroxyhexan-3-amine + NAD(+) + H2O = 4-hydroxyhexan-3-one + NH4(+) + NADH + H(+). The enzyme catalyses 5-hydroxyoctan-4-amine + NAD(+) + H2O = 5-hydroxyoctan-4-one + NH4(+) + NADH + H(+). The catalysed reaction is 2-hydroxy-1-phenylethan-1-amine + NAD(+) + H2O = 2-hydroxyacetophenone + NH4(+) + NADH + H(+). It catalyses the reaction hexan-2-amine + NAD(+) + H2O = hexan-2-one + NH4(+) + NADH + H(+). It carries out the reaction 4-phenylbutan-2-amine + NAD(+) + H2O = 4-phenylbutan-2-one + NH4(+) + NADH + H(+). Functionally, catalyzes the reversible oxidative deaminations of a broad range of amines, amino alcohols and amino acids. Catalyzes the reversible dehydrogenation of serinol in the presence of NAD(+) to give dihydroxyacetone, ammonium ion and NADH, while NADP(+) shows a slight activity. Is also able to produce 2-amino-1-propanol and aspartate by the reductive amination of the corresponding keto alcohol (hydroxyacetone) and keto acid (oxaloacetate) in the presence of ammonium ions and NADH, and that of acetophenone from phenylethylamine by the oxidative deamination in the presence of NAD(+). The polypeptide is Amine dehydrogenase (Streptomyces virginiae (Streptomyces cinnamonensis)).